Consider the following 169-residue polypeptide: Peptide methionine sulfoxide reductase MsrA (169 aa).

Cysteine 13 is a catalytic residue.

Belongs to the MsrA Met sulfoxide reductase family.

It catalyses the reaction L-methionyl-[protein] + [thioredoxin]-disulfide + H2O = L-methionyl-(S)-S-oxide-[protein] + [thioredoxin]-dithiol. It carries out the reaction [thioredoxin]-disulfide + L-methionine + H2O = L-methionine (S)-S-oxide + [thioredoxin]-dithiol. In terms of biological role, has an important function as a repair enzyme for proteins that have been inactivated by oxidation. Catalyzes the reversible oxidation-reduction of methionine sulfoxide in proteins to methionine. The sequence is that of Peptide methionine sulfoxide reductase MsrA from Mycolicibacterium gilvum (strain PYR-GCK) (Mycobacterium gilvum (strain PYR-GCK)).